The sequence spans 228 residues: Protein Iojap, chloroplastic (228 aa).

The interval 1-54 is disordered; it reads MGGTSAAVPSHGLACAPPAAVTLNPRARRRRASSGSGGHRSSPQQPLRSDLLPP. A chloroplast-targeting transit peptide spans 1-62; it reads MGGTSAAVPS…PPATVACRAR (62 aa).

The protein belongs to the Iojap/RsfS family. In terms of assembly, interacts with chloroplast ribosomal protein uL14c (rpl14).

It is found in the plastid. It localises to the chloroplast. Functionally, may be a ribosome silencing factor (Potential). Involved in plastid biogenesis. Plastids affected by a mutation in Iojap lose the ability to perform translation and lack plastid ribosomes. In Zea mays (Maize), this protein is Protein Iojap, chloroplastic (Ij).